The sequence spans 206 residues: Ribosomal RNA small subunit methyltransferase G (206 aa).

Residues Gly74, Leu79, Val125–Glu126, and Arg140 contribute to the S-adenosyl-L-methionine site.

The protein belongs to the methyltransferase superfamily. RNA methyltransferase RsmG family.

Its subcellular location is the cytoplasm. It catalyses the reaction guanosine(527) in 16S rRNA + S-adenosyl-L-methionine = N(7)-methylguanosine(527) in 16S rRNA + S-adenosyl-L-homocysteine. Its function is as follows. Specifically methylates the N7 position of guanine in position 527 of 16S rRNA. The sequence is that of Ribosomal RNA small subunit methyltransferase G from Shewanella baltica (strain OS223).